Consider the following 346-residue polypeptide: Short-wave-sensitive opsin 1 (346 aa).

Residues 1–31 (MSGEDDFYLFQNISSVGPWDGPQYHLAPVWA) are Extracellular-facing. The N-linked (GlcNAc...) asparagine glycan is linked to asparagine 12. A helical transmembrane segment spans residues 32-56 (FRLQAAFMGFVFFVGTPLNAIVLVA). Topologically, residues 57–68 (TLHYKKLRQPLN) are cytoplasmic. A helical membrane pass occupies residues 69–94 (YILVNVSLGGFLFCIFSVFTVFIASC). The Extracellular segment spans residues 95-108 (HGYFLFGRHVCALE). An intrachain disulfide couples cysteine 105 to cysteine 182. A helical membrane pass occupies residues 109 to 128 (AFLGSVAGLVTGWSLAFLAF). The Cytoplasmic segment spans residues 129-147 (ERYVVICKPFGSIRFNSKH). A helical transmembrane segment spans residues 148-171 (ALMVVLATWIIGIGVSIPPFFGWS). Over 172–197 (RFIPEGLQCSCGPDWYTVGTKYRSEY) the chain is Extracellular. A helical membrane pass occupies residues 198–225 (YTWFLFIFCFIIPLSLICFSYSQLLRTL). The Cytoplasmic portion of the chain corresponds to 226-247 (RAVAAQQQESATTQKAEREVSH). The helical transmembrane segment at 248–271 (MVVVMVGSFCLCYVPYAALAMYMV) threads the bilayer. Residues 272 to 279 (NNRNHGLD) are Extracellular-facing. A helical membrane pass occupies residues 280-304 (LRLVTIPAFFSKSSCVYNPIIYCFM). The residue at position 291 (lysine 291) is an N6-(retinylidene)lysine. The Cytoplasmic segment spans residues 305-346 (NKQFRACILEMVCRKPMADESDVSGSQKTEVSTVSSSKVGPH). The segment at 324-346 (ESDVSGSQKTEVSTVSSSKVGPH) is disordered. The span at 330-346 (SQKTEVSTVSSSKVGPH) shows a compositional bias: low complexity.

This sequence belongs to the G-protein coupled receptor 1 family. Opsin subfamily. Phosphorylated on some or all of the serine and threonine residues present in the C-terminal region. As to expression, expressed in the inner and outer segments of cone photoreceptor cells in the retina (at protein level).

It is found in the cell membrane. The protein localises to the photoreceptor inner segment. Its subcellular location is the cell projection. The protein resides in the cilium. It localises to the photoreceptor outer segment. It is found in the cytoplasm. The protein localises to the perinuclear region. In terms of biological role, visual pigments are the light-absorbing molecules that mediate vision. They consist of an apoprotein, opsin, covalently linked to cis-retinal. Required for the maintenance of cone outer segment organization in the ventral retina, but not essential for the maintenance of functioning cone photoreceptors. Involved in ensuring correct abundance and localization of retinal membrane proteins. May increase spectral sensitivity in dim light. This chain is Short-wave-sensitive opsin 1 (Opn1sw), found in Mus musculus (Mouse).